We begin with the raw amino-acid sequence, 633 residues long: MDLNKITSPSFLKNLNKKELEQVAQEIRTFLIEKCSVTGGHIGPNLGVVELTMMLHKMFDSPKDKFLWDVGHQAYVHKILTGRASQFDTLRQFKGLCGFPKRVESEHDEWETGHSSTSLSAAMGMAAARDIKKEHNYVIPIIGDGALTGGMALEALNHIGHAKTNMIVILNDNEMSIAPNVGALHSVLGRLRTAKEYSKAKEELESLINKIPVLGGKLASTAERLKDSLKYLVVSGVFFEELGFKYLGPIDGHDFEALEMTLSHAKKVKGPVLVHVITKKGKGYKPAEDDTIGNWHGTGPYKIENGAFVKSETKGPAWSSLIAETVRKIAHEDERIVTITPAMPVGSKLQGIQQDFPNRFFDVGIAEQHAATMAAGLATQNMKPFLAIYSTFLQRAYDQVLHDIARPNLNVFIGIDRAGLVGADGETHQGVFDIAFLRHIPNMTIMMPKDENEGQHMVKTAIEYDGGPIALRYPRGNGIGVPLDDELVALPIGSWEVLREGKDASILTFGTTIPMAMQAADMLAQQGIDIEVVNARFIKPMDKDMLHRILSNHKPILTIEEAVLKGGFGSGVLEFAHDHGYLNAIVDRMGIPDQYIEHGNVDQLLEEIHMTAEDAVARMQVLLQQKQQVGLNK.

Residues H72 and 113–115 (GHS) each bind thiamine diphosphate. D144 lines the Mg(2+) pocket. Thiamine diphosphate contacts are provided by residues 145-146 (GA), N173, Y284, and E367. N173 provides a ligand contact to Mg(2+).

It belongs to the transketolase family. DXPS subfamily. Homodimer. The cofactor is Mg(2+). It depends on thiamine diphosphate as a cofactor.

The enzyme catalyses D-glyceraldehyde 3-phosphate + pyruvate + H(+) = 1-deoxy-D-xylulose 5-phosphate + CO2. It functions in the pathway metabolic intermediate biosynthesis; 1-deoxy-D-xylulose 5-phosphate biosynthesis; 1-deoxy-D-xylulose 5-phosphate from D-glyceraldehyde 3-phosphate and pyruvate: step 1/1. Its function is as follows. Catalyzes the acyloin condensation reaction between C atoms 2 and 3 of pyruvate and glyceraldehyde 3-phosphate to yield 1-deoxy-D-xylulose-5-phosphate (DXP). This chain is 1-deoxy-D-xylulose-5-phosphate synthase, found in Lysinibacillus sphaericus (strain C3-41).